Consider the following 329-residue polypeptide: Phosphate acyltransferase (329 aa).

This sequence belongs to the PlsX family. In terms of assembly, homodimer. Probably interacts with PlsY.

It is found in the cytoplasm. It carries out the reaction a fatty acyl-[ACP] + phosphate = an acyl phosphate + holo-[ACP]. Its pathway is lipid metabolism; phospholipid metabolism. Catalyzes the reversible formation of acyl-phosphate (acyl-PO(4)) from acyl-[acyl-carrier-protein] (acyl-ACP). This enzyme utilizes acyl-ACP as fatty acyl donor, but not acyl-CoA. The sequence is that of Phosphate acyltransferase from Sulfurovum sp. (strain NBC37-1).